A 426-amino-acid chain; its full sequence is MELMMAIGYLGLALVLGSLVAKIAEKLKIPDIPLLLLLGLIIGPFLQIIPSDSAMEIFEYAGPIGLIFILLGGAFTMRISLLKRVIKTVVRLDTITFLITLLISGFIFNMVLNLPYTSPVGYLFGAITAATDPATLIPVFSRVRTNPEVAITLEAESIFNDPLGIVSTSVILGLFGLFSSSNPLIDLITLAGGAIVVGLLLAKIYEKIIIHCDFHEYVAPLVLGGAMLLLYVGDDLLPSICGYGFSGYMAVAIMGLYLGDALFRADDIDYKYIVSFCDDLSLLARVFIFVFLGACIKLSMLENYFIPGLLVALGSIFLARPLGVFLGLIGSKHSFKEKLYFALEGPRGVVPAALAVTVGIEILKNADKIPASITKYITPTDIAGTIIIGTFMTILLSVILEASWAGMLALKLLGEYKPKYKEESHH.

A run of 12 helical transmembrane segments spans residues 1 to 21 (MELMMAIGYLGLALVLGSLVA), 29 to 49 (IPDIPLLLLLGLIIGPFLQII), 57 to 77 (IFEYAGPIGLIFILLGGAFTM), 95 to 115 (ITFLITLLISGFIFNMVLNLP), 120 to 140 (VGYLFGAITAATDPATLIPVF), 158 to 178 (IFNDPLGIVSTSVILGLFGLF), 184 to 204 (LIDLITLAGGAIVVGLLLAKI), 208 to 228 (IIIHCDFHEYVAPLVLGGAML), 236 to 256 (LLPSICGYGFSGYMAVAIMGL), 286 to 306 (VFIFVFLGACIKLSMLENYFI), 309 to 329 (LLVALGSIFLARPLGVFLGLI), and 382 to 402 (IAGTIIIGTFMTILLSVILEA).

Belongs to the monovalent cation:proton antiporter 1 (CPA1) transporter (TC 2.A.36) family.

It is found in the cell membrane. In terms of biological role, this is a Na(+)/H(+) antiporter. Can also transport lithium. In Methanocaldococcus jannaschii (strain ATCC 43067 / DSM 2661 / JAL-1 / JCM 10045 / NBRC 100440) (Methanococcus jannaschii), this protein is Na(+)/H(+) antiporter 1.